Here is a 460-residue protein sequence, read N- to C-terminus: ATP synthase subunit beta (460 aa).

ATP is bound at residue 150-157; that stretch reads GGAGVGKT.

Belongs to the ATPase alpha/beta chains family. In terms of assembly, F-type ATPases have 2 components, CF(1) - the catalytic core - and CF(0) - the membrane proton channel. CF(1) has five subunits: alpha(3), beta(3), gamma(1), delta(1), epsilon(1). CF(0) has three main subunits: a(1), b(2) and c(9-12). The alpha and beta chains form an alternating ring which encloses part of the gamma chain. CF(1) is attached to CF(0) by a central stalk formed by the gamma and epsilon chains, while a peripheral stalk is formed by the delta and b chains.

It is found in the cell inner membrane. The catalysed reaction is ATP + H2O + 4 H(+)(in) = ADP + phosphate + 5 H(+)(out). Its function is as follows. Produces ATP from ADP in the presence of a proton gradient across the membrane. The catalytic sites are hosted primarily by the beta subunits. The chain is ATP synthase subunit beta from Salmonella agona (strain SL483).